Here is an 856-residue protein sequence, read N- to C-terminus: Inactive rhomboid protein 1 (856 aa).

Residues 1–21 (MGEARRDSSSSLQHKKPPWLK) are disordered. Residues 1–412 (MGEARRDSSS…HRPFFTYWLT (412 aa)) are Cytoplasmic-facing. A phosphoserine mark is found at Ser76 and Ser176. A phosphothreonine mark is found at Thr180 and Thr183. Position 391 is a phosphoserine (Ser391). A helical membrane pass occupies residues 413–433 (FVHSLVTILAVCIYGVAPVGF). Over 434-656 (SQHETVDSVL…NPEVPDQFYR (223 aa)) the chain is Lumenal. The N-linked (GlcNAc...) asparagine glycan is linked to Asn584. The helical transmembrane segment at 657 to 677 (LWLSLFLHAGVLHCLVSVCFQ) threads the bilayer. Residues 678–692 (MTVLRDLEKLAGWHR) are Cytoplasmic-facing. A helical transmembrane segment spans residues 693-713 (IAIIYLLSGVTGNLASAIFLP). Residues 714–715 (YR) lie on the Lumenal side of the membrane. The chain crosses the membrane as a helical span at residues 716–736 (AEVGPAGSQFGILACLFVELF). Residues 737 to 747 (QSWQILARPWR) lie on the Cytoplasmic side of the membrane. A helical transmembrane segment spans residues 748–768 (AFFKLLAVVLFLFTFGLLPWI). The Lumenal segment spans residues 769-773 (DNFAH). Residues 774 to 794 (ISGFISGLFLSFAFLPYISFG) form a helical membrane-spanning segment. The Cytoplasmic portion of the chain corresponds to 795–804 (KFDLYRKRCQ). Residues 805 to 825 (IIVFQLVFLGLLAGLVVLFYF) form a helical membrane-spanning segment. The Lumenal portion of the chain corresponds to 826-856 (YPVRCEWCEFLTCIPFTDKFCEKYELDAQLH).

The protein belongs to the peptidase S54 family. Homodimer, or homooligomer. Interacts with TGFA and HBEGF. Interacts with EGF; may retain EGF in the endoplasmic reticulum and regulates its degradation through the endoplasmic reticulum-associated degradation (ERAD). Interacts (via cytoplasmic N-terminus) with FRMD8/iTAP; this interaction leads to mutual protein stabilization. Interacts with ADAM17/TACE.

The protein localises to the endoplasmic reticulum membrane. The protein resides in the golgi apparatus membrane. In terms of biological role, regulates ADAM17 protease, a sheddase of the epidermal growth factor (EGF) receptor ligands and TNF, thereby plays a role in sleep, cell survival, proliferation, migration and inflammation. Does not exhibit any protease activity on its own. The polypeptide is Inactive rhomboid protein 1 (RHBDF1) (Bos taurus (Bovine)).